A 280-amino-acid polypeptide reads, in one-letter code: DNA repair protein RecO (280 aa).

Residues 261 to 280 are disordered; sequence DMAHGNHTGQEDLPATASGA.

It belongs to the RecO family.

Its function is as follows. Involved in DNA repair and RecF pathway recombination. The polypeptide is DNA repair protein RecO (Mycolicibacterium smegmatis (strain ATCC 700084 / mc(2)155) (Mycobacterium smegmatis)).